Consider the following 57-residue polypeptide: uncharacterized protein (57 aa).

Residues 1-10 show a composition bias toward basic and acidic residues; it reads MKRSRTEVGR. Positions 1-25 are disordered; it reads MKRSRTEVGRWRMQRQASRRKSRWL.

This sequence belongs to the YciY family.

This is an uncharacterized protein from Escherichia coli O1:K1 / APEC.